The following is a 480-amino-acid chain: Sensor histidine kinase CusS (480 aa).

The Cytoplasmic portion of the chain corresponds to 1–15 (MVSKPFQRPFSLATR). A helical transmembrane segment spans residues 16–36 (LTFFISLATIAAFFAFAWIMI). Topologically, residues 37–186 (HSVKVHFAEQ…LHYINDLMNK (150 aa)) are periplasmic. The chain crosses the membrane as a helical span at residues 187–207 (LIMTASVISILIVFIVLLAVH). The region spanning 208-260 (KGHAPIRSVSRQIQNITSKDLDVRLDPQTVPIELEQLVLSFNHMIERIEDVFT) is the HAMP domain. Over 208–480 (KGHAPIRSVS…GTRFVITLPA (273 aa)) the chain is Cytoplasmic. A Histidine kinase domain is found at 268 to 480 (DIAHEIRTPI…GTRFVITLPA (213 aa)). Residue histidine 271 is modified to Phosphohistidine; by autocatalysis.

Post-translationally, autophosphorylated.

It localises to the cell inner membrane. It catalyses the reaction ATP + protein L-histidine = ADP + protein N-phospho-L-histidine.. Member of the two-component regulatory system CusS/CusR involved in response to copper and silver. Acts as a copper/silver ion sensor. Activates CusR by phosphorylation. This chain is Sensor histidine kinase CusS (cusS), found in Escherichia coli (strain K12).